The primary structure comprises 92 residues: Small ribosomal subunit protein bS20 (92 aa).

Positions 1–23 (MANSPSAKKRAKQAEKRRSHNAS) are disordered. Positions 7–20 (AKKRAKQAEKRRSH) are enriched in basic residues.

This sequence belongs to the bacterial ribosomal protein bS20 family.

Its function is as follows. Binds directly to 16S ribosomal RNA. This is Small ribosomal subunit protein bS20 from Ectopseudomonas mendocina (strain ymp) (Pseudomonas mendocina).